Here is a 358-residue protein sequence, read N- to C-terminus: tRNA N6-adenosine threonylcarbamoyltransferase (358 aa).

The Fe cation site is built by H111 and H115. Substrate contacts are provided by residues 146–150, D179, G192, and N294; that span reads LVSGG. D322 provides a ligand contact to Fe cation.

It belongs to the KAE1 / TsaD family. It depends on Fe(2+) as a cofactor.

It is found in the cytoplasm. The enzyme catalyses L-threonylcarbamoyladenylate + adenosine(37) in tRNA = N(6)-L-threonylcarbamoyladenosine(37) in tRNA + AMP + H(+). In terms of biological role, required for the formation of a threonylcarbamoyl group on adenosine at position 37 (t(6)A37) in tRNAs that read codons beginning with adenine. Is involved in the transfer of the threonylcarbamoyl moiety of threonylcarbamoyl-AMP (TC-AMP) to the N6 group of A37, together with TsaE and TsaB. TsaD likely plays a direct catalytic role in this reaction. This is tRNA N6-adenosine threonylcarbamoyltransferase from Helicobacter hepaticus (strain ATCC 51449 / 3B1).